A 440-amino-acid polypeptide reads, in one-letter code: Glutamyl-tRNA reductase (440 aa).

Substrate-binding positions include 50–53 (TCNR), Ser109, 114–116 (EPQ), and Gln120. Residue Cys51 is the Nucleophile of the active site. Residue 189–194 (GAGEMA) coordinates NADP(+).

The protein belongs to the glutamyl-tRNA reductase family. In terms of assembly, homodimer.

The catalysed reaction is (S)-4-amino-5-oxopentanoate + tRNA(Glu) + NADP(+) = L-glutamyl-tRNA(Glu) + NADPH + H(+). Its pathway is porphyrin-containing compound metabolism; protoporphyrin-IX biosynthesis; 5-aminolevulinate from L-glutamyl-tRNA(Glu): step 1/2. Its function is as follows. Catalyzes the NADPH-dependent reduction of glutamyl-tRNA(Glu) to glutamate 1-semialdehyde (GSA). The chain is Glutamyl-tRNA reductase from Nitratidesulfovibrio vulgaris (strain DP4) (Desulfovibrio vulgaris).